We begin with the raw amino-acid sequence, 286 residues long: Bifunctional protein FolD 2 (286 aa).

Residues 165–167, Thr192, and Ile233 each bind NADP(+); that span reads GRG.

Belongs to the tetrahydrofolate dehydrogenase/cyclohydrolase family. As to quaternary structure, homodimer.

It catalyses the reaction (6R)-5,10-methylene-5,6,7,8-tetrahydrofolate + NADP(+) = (6R)-5,10-methenyltetrahydrofolate + NADPH. The catalysed reaction is (6R)-5,10-methenyltetrahydrofolate + H2O = (6R)-10-formyltetrahydrofolate + H(+). It functions in the pathway one-carbon metabolism; tetrahydrofolate interconversion. Its function is as follows. Catalyzes the oxidation of 5,10-methylenetetrahydrofolate to 5,10-methenyltetrahydrofolate and then the hydrolysis of 5,10-methenyltetrahydrofolate to 10-formyltetrahydrofolate. In Salinispora tropica (strain ATCC BAA-916 / DSM 44818 / JCM 13857 / NBRC 105044 / CNB-440), this protein is Bifunctional protein FolD 2.